Consider the following 204-residue polypeptide: Probable GTP-binding protein EngB (204 aa).

The 175-residue stretch at 27-201 folds into the EngB-type G domain; the sequence is SGIEIAFAGR…SEKLDQWFSP (175 aa). Residues 35 to 42, 62 to 66, 80 to 83, 147 to 150, and 180 to 182 contribute to the GTP site; these read GRSNAGKS, GRTQL, DLPG, TKAD, and FSA. Mg(2+)-binding residues include serine 42 and threonine 64.

This sequence belongs to the TRAFAC class TrmE-Era-EngA-EngB-Septin-like GTPase superfamily. EngB GTPase family. Mg(2+) serves as cofactor.

Necessary for normal cell division and for the maintenance of normal septation. The sequence is that of Probable GTP-binding protein EngB from Histophilus somni (strain 129Pt) (Haemophilus somnus).